The sequence spans 402 residues: KSEQSSFSSSSSVRNELSVYHNSRQKPPAEKTNQSSKNIGKKAAPFKKQKRANKGSSGAQVLYAKDSGGAQNESLRSNEADLAKKKNPNPSGDTGSSKNQDSMAAQNVHQKSQMSVETCTTPSKSNLILESLGLQFFGREVTLFRLKNYLTSERHSDVDDNVVQENLNDSRGEIPDSTPESKMHHKLVLPSYTPNVRRTMRTRSKPLEYWRGERIDYQARPSGGFVIGGILSPDTVSSKRKAKGNLGRIITTANRKRICLENAPIKNKFMVNLNIPLGDPLQPTRVKDPETQETVLMDLIRPRDTYQFCVEHDELKVYKTLDTPFFSSGKLIIGPLQEKGKQHVGLDTLVFYVNLGYLLCTLHETPYIVTTGDSFYVPSGNYYNIKNLLNEERVLLFTQIKS.

Lys1 participates in a covalent cross-link: Glycyl lysine isopeptide (Lys-Gly) (interchain with G-Cter in SUMO2). A compositionally biased stretch (low complexity) spans Lys1–Ser12. Residues Lys1 to Thr118 are disordered. Ser5 is modified (phosphoserine). The Nuclear localization signal signature appears at Gln25–Lys42. Basic residues predominate over residues Ala44–Asn53. Residues Pro88 to Thr118 are compositionally biased toward polar residues. Lys186 is covalently cross-linked (Glycyl lysine isopeptide (Lys-Gly) (interchain with G-Cter in SUMO2)). At Thr193 the chain carries Phosphothreonine. Positions Val196–Gln218 are MIF2 homology domain II. Residues Ser222 and Ser232 each carry the phosphoserine modification. The Nuclear localization signal signature appears at Lys239–Arg257. Lys266 participates in a covalent cross-link: Glycyl lysine isopeptide (Lys-Gly) (interchain with G-Cter in SUMO2). The MIF2 homology domain III stretch occupies residues Leu349 to Ser402.

It belongs to the CENP-C/MIF2 family. In terms of assembly, oligomer. Component of the CENPA-NAC complex, at least composed of CENPA, CENPC, CENPH, CENPM, CENPN, CENPT and CENPU. The CENPA-NAC complex interacts with the CENPA-CAD complex, composed of CENPI, CENPK, CENPL, CENPO, CENPP, CENPQ, CENPR and CENPS. Binds to DAXX. Interacts with DNMT3B. Interacts directly with CENPA. Identified in a centromere complex containing histones H2A, H2B and H4, and at least CENPA, CENPB, CENPC, CENPT, CENPN, HJURP, SUPT16H, SSRP1 and RSF1. Interacts with MEIKIN.

It is found in the nucleus. It localises to the chromosome. The protein resides in the centromere. The protein localises to the kinetochore. Functionally, component of the CENPA-NAC (nucleosome-associated) complex, a complex that plays a central role in assembly of kinetochore proteins, mitotic progression and chromosome segregation. The CENPA-NAC complex recruits the CENPA-CAD (nucleosome distal) complex and may be involved in incorporation of newly synthesized CENPA into centromeres. CENPC recruits DNA methylation and DNMT3B to both centromeric and pericentromeric satellite repeats and regulates the histone code in these regions. The chain is Centromere protein C (CENPC) from Ovis aries (Sheep).